We begin with the raw amino-acid sequence, 1036 residues long: Lethal(2) giant larvae protein homolog 1 (1036 aa).

WD repeat units follow at residues 38–71 (SALA…FTGL), 78–119 (VTQM…GLSF), 139–175 (VTVV…GQTL), 199–233 (SLQG…EHVF), 239–271 (LESL…GSPP), 289–331 (AINK…ETLV), 339–373 (VIDF…VLDL), 395–473 (TCSA…YKLS), 517–592 (QKVA…RVLI), and 601–662 (TAVA…LRQS). Ser-662 is modified (phosphoserine). The interval 670 to 694 (RVSGKKRATTASSKLQEANAQLAEQ) is disordered. The segment covering 678-693 (TTASSKLQEANAQLAE) has biased composition (polar residues). WD repeat units lie at residues 722–782 (VRCL…KEVQ), 791–843 (AIAV…VSAK), 848–901 (LTAH…VHYS), and 915–938 (VFTR…SLSA). Thr-957 carries the post-translational modification Phosphothreonine. Residues Ser-964, Ser-982, and Ser-989 each carry the phosphoserine modification. Positions 980-1002 (PESCEGSPSSAHSKRADTMEPPE) are disordered.

Belongs to the WD repeat L(2)GL family. In terms of assembly, associated with nonmuscle myosin II heavy chain. Interacts with PRKCI/aPKC, PARD6B/Par-6 and PARD6A. Interacts with STX4A. Interacts with DCAF1. Interacts with RAB10 (GDP-bound form); the interaction is direct and promotes RAB10 association with membranes and activation through competition with the Rab inhibitor GDI1. In terms of processing, phosphorylated by PRKCI. In terms of tissue distribution, expressed at high level in the testis and at lower level in ovary, brain, spleen and kidney.

It is found in the early endosome membrane. The protein resides in the golgi apparatus. Its subcellular location is the trans-Golgi network membrane. It localises to the golgi apparatus membrane. The protein localises to the cell projection. It is found in the axon. The protein resides in the cytoplasm. Its subcellular location is the cytoskeleton. Cortical cytoskeleton protein found in a complex involved in maintaining cell polarity and epithelial integrity. Involved in the regulation of mitotic spindle orientation, proliferation, differentiation and tissue organization of neuroepithelial cells. Involved in axonogenesis through RAB10 activation thereby regulating vesicular membrane trafficking toward the axonal plasma membrane. The polypeptide is Lethal(2) giant larvae protein homolog 1 (Llgl1) (Rattus norvegicus (Rat)).